Consider the following 911-residue polypeptide: Androgen receptor (911 aa).

The tract at residues methionine 1 to lysine 549 is modulating. Residues methionine 1–alanine 578 are interaction with ZNF318. 2 disordered regions span residues glutamine 35–leucine 164 and glutamine 192–glycine 225. Low complexity predominate over residues alanine 44–glutamine 88. The residue at position 81 (serine 81) is a Phosphoserine; by CDK9. Serine 93 carries the phosphoserine modification. Over residues glutamine 192 to alanine 214 the composition is skewed to low complexity. The span at proline 215–glycine 225 shows a compositional bias: polar residues. Tyrosine 222 bears the Phosphotyrosine; by CSK mark. Serine 255 bears the Phosphoserine mark. Residue tyrosine 266 is modified to Phosphotyrosine; by CSK and TNK2. Phosphotyrosine; by CSK is present on residues tyrosine 306, tyrosine 345, tyrosine 356, and tyrosine 361. Tyrosine 362 carries the post-translational modification Phosphotyrosine; by CSK and TNK2. Lysine 385 participates in a covalent cross-link: Glycyl lysine isopeptide (Lys-Gly) (interchain with G-Cter in SUMO). Tyrosine 392 is modified (phosphotyrosine; by CSK). A Glycyl lysine isopeptide (Lys-Gly) (interchain with G-Cter in SUMO) cross-link involves residue lysine 512. Residues tyrosine 526 and tyrosine 543 each carry the phosphotyrosine; by CSK modification. The interval tyrosine 543 to threonine 910 is interaction with LPXN. 2 consecutive NR C4-type zinc fingers follow at residues cysteine 551–cysteine 571 and cysteine 587–cysteine 611. A DNA-binding region (nuclear receptor) is located at residues cysteine 551 to leucine 623. The segment at tyrosine 563–valine 653 is interaction with HIPK3. Residues glutamine 583–threonine 910 are interaction with CCAR1. Positions methionine 616–threonine 910 are interaction with KAT7. Position 642 is a phosphoserine; by STK4/MST1 (serine 642). Residues glutamate 660 to isoleucine 891 form the NR LBD domain. Asparagine 697 and arginine 744 together coordinate 17beta-hydroxy-5alpha-androstan-3-one. Residues lysine 837 and lysine 839 each participate in a glycyl lysine isopeptide (Lys-Gly) (interchain with G-Cter in ubiquitin) cross-link. Threonine 869 is a 17beta-hydroxy-5alpha-androstan-3-one binding site. Residue tyrosine 907 is modified to Phosphotyrosine; by CSK.

Belongs to the nuclear hormone receptor family. NR3 subfamily. Binds DNA as a homodimer. Part of a ternary complex containing AR, EFCAB6/DJBP and PARK7. Interacts with HIPK3 and NR0B2 in the presence of androgen. The ligand binding domain interacts with KAT7/HBO1 in the presence of dihydrotestosterone. Interacts with EFCAB6/DJBP, PQBP1, RANBP9, RBAK, SPDEF, SRA1, TGFB1I1 and RREB1. Interacts with ZMIZ1/ZIMP10 and ZMIZ2/ZMIP7 which both enhance its transactivation activity. Interacts with SLC30A9 and RAD54L2/ARIP4. Interacts with MACROD1 (via macro domain). Interacts via the ligand-binding domain with LXXLL and FXXLF motifs from NCOA1, NCOA2, NCOA3 and MAGEA11. Interacts (via nuclear receptor DNA binding domain and nuclear receptor ligand binding domain) with NCOA4. The AR N-terminal poly-Gln region binds Ran resulting in enhancement of AR-mediated transactivation. Ran-binding decreases as the poly-Gln length increases. Interacts with HIP1 (via coiled coil domain). Interacts (via ligand-binding domain) with TRIM68. Interacts with TNK2. Interacts with USP26. Interacts with RNF6. Interacts (regulated by RNF6 probably through polyubiquitination) with RNF14; regulates AR transcriptional activity. Interacts with PRMT2 and TRIM24. Interacts with RACK1. Interacts with RANBP10; this interaction enhances dihydrotestosterone-induced AR transcriptional activity. Interacts with PRPF6 in a hormone-independent way; this interaction enhances dihydrotestosterone-induced AR transcriptional activity. Interacts with STK4/MST1. Interacts with ZIPK/DAPK3. Interacts with LPXN. Interacts with MAK. Part of a complex containing AR, MAK and NCOA3. Interacts with CRY1. Interacts with CCAR1 and GATA2. Interacts with ZNF318. Interacts with BUD31. Interacts with ARID4A. Interacts with ARID4B. Interacts (via NR LBD domain) with ZBTB7A; the interaction is direct and androgen-dependent. Interacts with NCOR1. Interacts with NCOR2. Interacts with CRY2 in a ligand-dependent manner. Post-translationally, phosphorylated in prostate cancer cells in response to several growth factors including EGF. Phosphorylation is induced by c-Src kinase (CSK). Tyr-526 is one of the major phosphorylation sites and an increase in phosphorylation and Src kinase activity is associated with prostate cancer progression. Phosphorylation by TNK2 enhances the DNA-binding and transcriptional activity. Phosphorylation at Ser-81 by CDK9 regulates AR promoter selectivity and cell growth. Sumoylated on Lys-385 (major) and Lys-512. Ubiquitinated. Deubiquitinated by USP26. 'Lys-6' and 'Lys-27'-linked polyubiquitination by RNF6 modulates AR transcriptional activity and specificity. In terms of processing, palmitoylated by ZDHHC7 and ZDHHC21. Palmitoylation is required for plasma membrane targeting and for rapid intracellular signaling via ERK and AKT kinases and cAMP generation.

Its subcellular location is the nucleus. The protein localises to the cytoplasm. Functionally, steroid hormone receptors are ligand-activated transcription factors that regulate eukaryotic gene expression and affect cellular proliferation and differentiation in target tissues. Transcription factor activity is modulated by bound coactivator and corepressor proteins like ZBTB7A that recruits NCOR1 and NCOR2 to the androgen response elements/ARE on target genes, negatively regulating androgen receptor signaling and androgen-induced cell proliferation. Transcription activation is also down-regulated by NR0B2. Activated, but not phosphorylated, by HIPK3 and ZIPK/DAPK3. This chain is Androgen receptor (AR), found in Pan troglodytes (Chimpanzee).